Consider the following 704-residue polypeptide: Acetate--CoA ligase [ADP-forming] (704 aa).

In the N-terminal section; belongs to the acetate CoA ligase alpha subunit family. It in the C-terminal section; belongs to the acetate CoA ligase beta subunit family. As to quaternary structure, homodimer.

It carries out the reaction acetate + ATP + CoA = acetyl-CoA + ADP + phosphate. Its function is as follows. Catalyzes the formation of acetate and ATP from acetyl-CoA by using ADP and phosphate. Can also use butyryl-CoA, but not phenylacetyl-CoA. Cannot catalyze the reverse reaction. This Methanocaldococcus jannaschii (strain ATCC 43067 / DSM 2661 / JAL-1 / JCM 10045 / NBRC 100440) (Methanococcus jannaschii) protein is Acetate--CoA ligase [ADP-forming].